A 158-amino-acid polypeptide reads, in one-letter code: E3 ubiquitin ligase complex SCF subunit sconC (158 aa).

The interaction with the F-box domain of F-box proteins stretch occupies residues 100–158 (ILAANYLDIKALLDVGCKTVANMIKGKSPEEIRKTFNIQNDFTPEEEDQIRRENEWAEE).

The protein belongs to the SKP1 family. As to quaternary structure, component of the SCF (SKP1-CUL1-F-box protein) E3 ubiquitin ligase complexes.

It participates in protein modification; protein ubiquitination. Essential component of the SCF (SKP1-CUL1-F-box protein) E3 ubiquitin ligase complexes, which mediate the ubiquitination and subsequent proteasomal degradation of target proteins. Controls sulfur metabolite repression, probably by mediating the inactivation or degradation of the metR transcription factor. This Aspergillus fumigatus (strain CBS 144.89 / FGSC A1163 / CEA10) (Neosartorya fumigata) protein is E3 ubiquitin ligase complex SCF subunit sconC (sconC).